A 502-amino-acid chain; its full sequence is Maturase K (502 aa).

It belongs to the intron maturase 2 family. MatK subfamily.

The protein resides in the plastid. It is found in the chloroplast. Functionally, usually encoded in the trnK tRNA gene intron. Probably assists in splicing its own and other chloroplast group II introns. In Sisymbrium irio (London rocket), this protein is Maturase K.